We begin with the raw amino-acid sequence, 72 residues long: ATP synthase subunit c (72 aa).

Helical transmembrane passes span 1-21 and 49-69; these read MSLG…GAGI and FIGV…AFIV.

This sequence belongs to the ATPase C chain family. F-type ATPases have 2 components, F(1) - the catalytic core - and F(0) - the membrane proton channel. F(1) has five subunits: alpha(3), beta(3), gamma(1), delta(1), epsilon(1). F(0) has three main subunits: a(1), b(2) and c(10-14). The alpha and beta chains form an alternating ring which encloses part of the gamma chain. F(1) is attached to F(0) by a central stalk formed by the gamma and epsilon chains, while a peripheral stalk is formed by the delta and b chains.

The protein localises to the cell membrane. In terms of biological role, f(1)F(0) ATP synthase produces ATP from ADP in the presence of a proton or sodium gradient. F-type ATPases consist of two structural domains, F(1) containing the extramembraneous catalytic core and F(0) containing the membrane proton channel, linked together by a central stalk and a peripheral stalk. During catalysis, ATP synthesis in the catalytic domain of F(1) is coupled via a rotary mechanism of the central stalk subunits to proton translocation. Its function is as follows. Key component of the F(0) channel; it plays a direct role in translocation across the membrane. A homomeric c-ring of between 10-14 subunits forms the central stalk rotor element with the F(1) delta and epsilon subunits. This is ATP synthase subunit c from Bacillus anthracis (strain A0248).